The following is a 206-amino-acid chain: Potassium channel B446_29190 (206 aa).

M1 is a topological domain (cytoplasmic). The helical transmembrane segment at 2 to 25 threads the bilayer; sequence NESGRVEAFSDGVFAIAITLLILD. Residues 6-12 carry the RxxxFSD motif motif; it reads RVEAFSD. The Extracellular segment spans residues 26–44; sequence IKVPKADGPGGLWHALGAQ. The short helix H1 stretch occupies residues 31–34; the sequence is ADGP. The interval 36 to 42 is short helix H2; that stretch reads GLWHALG. A helical membrane pass occupies residues 45 to 70; it reads WPSYAAYVVSFLVIGIMWVNHHQVFS. Residues 71–76 lie on the Cytoplasmic side of the membrane; the sequence is YVARVD. Residues 77 to 102 traverse the membrane as a helical segment; the sequence is RALMFLNLLVLMVVAAVPWPTAMLAE. Over 103-110 the chain is Extracellular; it reads YLREDRAS. Residues 111–135 traverse the membrane as a helical segment; the sequence is HVAAAVYSLVMVAMALAFQALWWHL. The Cytoplasmic segment spans residues 136 to 147; it reads TRTGHLFDPRVD. A helical transmembrane segment spans residues 148 to 174; it reads APAARATRIRFALGSLGYPLTVGLAFV. Topologically, residues 175–176 are extracellular; sequence SA. Residues 177 to 192 traverse the membrane as a helical segment; the sequence is PLTLAAHGLLALYYGF. Residues 193 to 206 are Cytoplasmic-facing; it reads NQVPVPTREAAAPS.

Belongs to the TMEM175 family. Homotetramer.

Its subcellular location is the membrane. The enzyme catalyses K(+)(in) = K(+)(out). Potassium channel. This chain is Potassium channel B446_29190, found in Streptomyces collinus (strain DSM 40733 / Tue 365).